Reading from the N-terminus, the 338-residue chain is 1-aminocyclopropane-1-carboxylate deaminase (338 aa).

The residue at position 51 (K51) is an N6-(pyridoxal phosphate)lysine. The active-site Nucleophile is S78.

It belongs to the ACC deaminase/D-cysteine desulfhydrase family. Homotrimer. The cofactor is pyridoxal 5'-phosphate.

It carries out the reaction 1-aminocyclopropane-1-carboxylate + H2O = 2-oxobutanoate + NH4(+). Catalyzes a cyclopropane ring-opening reaction, the irreversible conversion of 1-aminocyclopropane-1-carboxylate (ACC) to ammonia and alpha-ketobutyrate. Allows growth on ACC as a nitrogen source. The polypeptide is 1-aminocyclopropane-1-carboxylate deaminase (Burkholderia vietnamiensis (strain G4 / LMG 22486) (Burkholderia cepacia (strain R1808))).